The chain runs to 130 residues: Small ribosomal subunit protein uS11c (130 aa).

This sequence belongs to the universal ribosomal protein uS11 family. Part of the 30S ribosomal subunit.

The protein localises to the plastid. It is found in the chloroplast. The chain is Small ribosomal subunit protein uS11c from Drimys granadensis.